The primary structure comprises 127 residues: Large ribosomal subunit protein bL12 (127 aa).

The protein belongs to the bacterial ribosomal protein bL12 family. Homodimer. Part of the ribosomal stalk of the 50S ribosomal subunit. Forms a multimeric L10(L12)X complex, where L10 forms an elongated spine to which 2 to 4 L12 dimers bind in a sequential fashion. Binds GTP-bound translation factors.

Its function is as follows. Forms part of the ribosomal stalk which helps the ribosome interact with GTP-bound translation factors. Is thus essential for accurate translation. This is Large ribosomal subunit protein bL12 from Pelobacter propionicus (strain DSM 2379 / NBRC 103807 / OttBd1).